A 465-amino-acid chain; its full sequence is MKWDKLLNDKRRRESGVTRSKNTDVRSAFENDFQRIVMSASFRRLQDKTQVFPLEKSDFVRTRLTHSMEVSTIAKSMGNMVTHTIQEENLDQDFTKDHAEKIPEILACAGLLHDMGNPPFGHFGEESIREWFRDNLATITYKNKSLAEILTPQMKEDFYYFEGNAQVLRVVSKLHYLFDQYGLNLTFATLNAVIKYPVSSLKVNKKQIKSKKLGYFYADESLFNEITTATEALDNRHPLTYLLEVADDIAYLNADLEDGVKKGIVNITQILKGFEEVEEHNKVTAACYNELKKKSERYEGQEESFIVQQWLASNVRGQLINRSLEVFYENYDAIMAGTFNDSLIDASSAEQLVQILQSLSFTYIYQDKGIVESEIAGNEIISKLLETFIPAVIYYDSETPERQTAKDKRLLTLISDNYLGCYRKNAEGESETMKLYLRLLLVTDFICGMTDSYAKDLYQRLNGLS.

Positions 1–22 (MKWDKLLNDKRRRESGVTRSKN) are disordered. The 190-residue stretch at 63–252 (RLTHSMEVST…LEVADDIAYL (190 aa)) folds into the HD domain.

Belongs to the dGTPase family. Type 3 subfamily.

In Listeria monocytogenes serovar 1/2a (strain ATCC BAA-679 / EGD-e), this protein is Deoxyguanosinetriphosphate triphosphohydrolase-like protein.